Reading from the N-terminus, the 351-residue chain is UDP-3-O-acylglucosamine N-acyltransferase (351 aa).

Residue H240 is the Proton acceptor of the active site.

Belongs to the transferase hexapeptide repeat family. LpxD subfamily. Homotrimer.

It catalyses the reaction a UDP-3-O-[(3R)-3-hydroxyacyl]-alpha-D-glucosamine + a (3R)-hydroxyacyl-[ACP] = a UDP-2-N,3-O-bis[(3R)-3-hydroxyacyl]-alpha-D-glucosamine + holo-[ACP] + H(+). It functions in the pathway bacterial outer membrane biogenesis; LPS lipid A biosynthesis. In terms of biological role, catalyzes the N-acylation of UDP-3-O-acylglucosamine using 3-hydroxyacyl-ACP as the acyl donor. Is involved in the biosynthesis of lipid A, a phosphorylated glycolipid that anchors the lipopolysaccharide to the outer membrane of the cell. This Pseudomonas syringae pv. syringae (strain B728a) protein is UDP-3-O-acylglucosamine N-acyltransferase.